The sequence spans 137 residues: Endoribonuclease YbeY (137 aa).

The Zn(2+) site is built by histidine 105, histidine 109, and aspartate 115.

It belongs to the endoribonuclease YbeY family. Zn(2+) serves as cofactor.

Its subcellular location is the cytoplasm. Functionally, single strand-specific metallo-endoribonuclease involved in late-stage 70S ribosome quality control and in maturation of the 3' terminus of the 16S rRNA. The polypeptide is Endoribonuclease YbeY (Chlorobaculum tepidum (strain ATCC 49652 / DSM 12025 / NBRC 103806 / TLS) (Chlorobium tepidum)).